A 100-amino-acid polypeptide reads, in one-letter code: Urease subunit gamma (100 aa).

The protein belongs to the urease gamma subunit family. As to quaternary structure, heterotrimer of UreA (gamma), UreB (beta) and UreC (alpha) subunits. Three heterotrimers associate to form the active enzyme.

The protein resides in the cytoplasm. The enzyme catalyses urea + 2 H2O + H(+) = hydrogencarbonate + 2 NH4(+). The protein operates within nitrogen metabolism; urea degradation; CO(2) and NH(3) from urea (urease route): step 1/1. This Corynebacterium urealyticum (strain ATCC 43042 / DSM 7109) protein is Urease subunit gamma.